The following is a 1747-amino-acid chain: E3 ubiquitin-protein ligase listerin (1747 aa).

The disordered stretch occupies residues 1–24 (MGGKTKQAPRTKNNAKPSSSSRTA). The span at 8–24 (APRTKNNAKPSSSSRTA) shows a compositional bias: polar residues. 5 HEAT repeats span residues 65 to 102 (AAIS…QSDV), 106 to 144 (KNIL…KCKK), 346 to 383 (NIRK…KVTQ), 424 to 461 (NAYF…NVLE), and 508 to 547 (KFWI…ANPS). Serine 566 is subject to Phosphoserine. HEAT repeat units follow at residues 612–653 (SRYI…LLGQ), 664–711 (EIVF…CAEA), 789–825 (SFIA…EHRP), 952–989 (LSRN…DPED), 1005–1042 (KWNE…ELVL), 1053–1090 (GNSS…FCPQ), 1129–1166 (KLSQ…NFEG), 1216–1258 (VEFI…SIAQ), 1269–1307 (VAVY…LFAK), 1330–1363 (FQAC…NSNI), 1364–1400 (TLDH…HFVA), and 1500–1539 (ENFL…QKDR). An RING-type zinc finger spans residues 1697–1744 (CYVCYTVIHQETCQLPKLTCKTCKKKFHGPCLYKWFTTSSKSTCPICR).

The protein belongs to the LTN1 family. In terms of assembly, component of the ribosome quality control complex (RQC), composed of at least the E3 ubiquitin ligase l(3)76BDr/LTN1 and Clbn/NEMF. The complex probably also contains TCF25 as well as TER94/VCP and its ubiquitin-binding cofactors. RQC forms a stable complex with 60S ribosomal subunits.

Its subcellular location is the cytoplasm. The protein resides in the cytosol. It carries out the reaction S-ubiquitinyl-[E2 ubiquitin-conjugating enzyme]-L-cysteine + [acceptor protein]-L-lysine = [E2 ubiquitin-conjugating enzyme]-L-cysteine + N(6)-ubiquitinyl-[acceptor protein]-L-lysine.. It participates in protein modification; protein ubiquitination. E3 ubiquitin-protein ligase component of the ribosome quality control complex (RQC), a ribosome-associated complex that mediates ubiquitination and extraction of incompletely synthesized nascent chains for proteasomal degradation. Ubiquitination leads to TER94/VCP recruitment for extraction and degradation of the incomplete translation product. This chain is E3 ubiquitin-protein ligase listerin, found in Drosophila melanogaster (Fruit fly).